The chain runs to 303 residues: Ribosomal protein L11 methyltransferase (303 aa).

T152, G173, D195, and N239 together coordinate S-adenosyl-L-methionine.

It belongs to the methyltransferase superfamily. PrmA family.

It localises to the cytoplasm. It catalyses the reaction L-lysyl-[protein] + 3 S-adenosyl-L-methionine = N(6),N(6),N(6)-trimethyl-L-lysyl-[protein] + 3 S-adenosyl-L-homocysteine + 3 H(+). In terms of biological role, methylates ribosomal protein L11. The polypeptide is Ribosomal protein L11 methyltransferase (Desulforapulum autotrophicum (strain ATCC 43914 / DSM 3382 / VKM B-1955 / HRM2) (Desulfobacterium autotrophicum)).